Here is a 332-residue protein sequence, read N- to C-terminus: Aquaporin Lacbi1:317173 (332 aa).

Residues 1 to 20 show a composition bias toward polar residues; that stretch reads MSGQHQITEQSSRNPLSRVS. A disordered region spans residues 1 to 45; the sequence is MSGQHQITEQSSRNPLSRVSTLLPEKPLSPTSTYAGTQKHPEAPR. The Cytoplasmic portion of the chain corresponds to 1-66; that stretch reads MSGQHQITEQ…RNAIRKPMAE (66 aa). A helical transmembrane segment spans residues 67–87; the sequence is FFGVALLIIFGAGSACQVVLS. At 88-100 the chain is on the extracellular side; it reads TNPDVASSARGSF. A helical membrane pass occupies residues 101–121; it reads LSINFGWAIGIAMGVWVSGGI. Residues 122–144 lie on the Cytoplasmic side of the membrane; sequence SGGHINPAITIAMATYRGFPWRK. An NPA 1 motif is present at residues 127–129; it reads NPA. The chain crosses the membrane as a helical span at residues 145 to 165; that stretch reads VPSYILAQVLGGVVGAGLVYA. The Extracellular segment spans residues 166–199; the sequence is NYIHAIDIFEGGHHIRTQATASLFATYALPYMTQ. The chain crosses the membrane as a helical span at residues 200-220; the sequence is ASCFFSEFLATAVLSMMVFAL. The Cytoplasmic segment spans residues 221 to 230; the sequence is TDKRNHSPTN. Residues 231–251 form a helical membrane-spanning segment; the sequence is GLLPFALFILFVGLGASLGME. Over 252–283 the chain is Extracellular; it reads TAYALNPARDFGPRLFLAMAGYGKALFNYRSQ. Residues 257-259 carry the NPA 2 motif; sequence NPA. A helical membrane pass occupies residues 284 to 304; that stretch reads YWLWAPIIAPVLGAQAGGLLY. Over 305-332 the chain is Cytoplasmic; it reads DTFLNDGDNSPIKWRCASSQEHQLAEVV.

The protein belongs to the MIP/aquaporin (TC 1.A.8) family.

It is found in the membrane. It carries out the reaction H2O(in) = H2O(out). The enzyme catalyses NH4(+)(in) = NH4(+)(out). Water channel required to facilitate the transport of water across membranes. Acts as the most efficient Laccaria water channel. In addition to water, also shows strong ammonium transport activity. May be involved in fungal nitrogen (ammonium) support of the plant host in symbiosis. This Laccaria bicolor (strain S238N-H82 / ATCC MYA-4686) (Bicoloured deceiver) protein is Aquaporin Lacbi1:317173.